Here is a 322-residue protein sequence, read N- to C-terminus: MADWSLLPNDLLELIVGHLETSFEIVLFRSVCSSWRSVVPPQDQSRCLSIKTHDISFNAGFSFSGQPTDHPLFGSTLTKIPIYLVKFWTPFGDDYLLAEMREREGGEPMFLLSPLSSNRIIYGMGINKVLFNSLTSPIIPFGQYYEITYSEKQPIRYRYGLPCHLWDKLEWVEITERVEFLKLDSEDSRDFAVLFAGRMCNLVMYRSRNMSWTQVVEHPEKYAYQDLVAFKGKFYALDSSGRGRVFVVELSLEVMEIPSVRGSQQSSKENLVLSGEELLLVQRFTPEVRHYDEYLYTWFRVFRLDEEEGRESGFKLMTLTTE.

Residues 2-50 (ADWSLLPNDLLELIVGHLETSFEIVLFRSVCSSWRSVVPPQDQSRCLSI) form the F-box domain.

This Arabidopsis thaliana (Mouse-ear cress) protein is F-box protein At2g16300.